The primary structure comprises 240 residues: Tubulin alpha chain (240 aa).

N17 is a GTP binding site. E43 is a catalytic residue.

This sequence belongs to the tubulin family. In terms of assembly, dimer of alpha and beta chains. A typical microtubule is a hollow water-filled tube with an outer diameter of 25 nm and an inner diameter of 15 nM. Alpha-beta heterodimers associate head-to-tail to form protofilaments running lengthwise along the microtubule wall with the beta-tubulin subunit facing the microtubule plus end conferring a structural polarity. Microtubules usually have 13 protofilaments but different protofilament numbers can be found in some organisms and specialized cells. Mg(2+) serves as cofactor. In terms of processing, undergoes a tyrosination/detyrosination cycle, the cyclic removal and re-addition of a C-terminal tyrosine residue by the enzymes tubulin tyrosine carboxypeptidase (TTCP) and tubulin tyrosine ligase (TTL), respectively.

The protein localises to the cytoplasm. It localises to the cytoskeleton. It carries out the reaction GTP + H2O = GDP + phosphate + H(+). Its function is as follows. Tubulin is the major constituent of microtubules, a cylinder consisting of laterally associated linear protofilaments composed of alpha- and beta-tubulin heterodimers. Microtubules grow by the addition of GTP-tubulin dimers to the microtubule end, where a stabilizing cap forms. Below the cap, tubulin dimers are in GDP-bound state, owing to GTPase activity of alpha-tubulin. This is Tubulin alpha chain from Octopus vulgaris (Common octopus).